The primary structure comprises 114 residues: MGPRLLFWALLCLLGTGPVEAGVTQSPTHLIKTRGQQATLRCSPISGHTSVYWYQQALGLGLQFLLWYDEGEERNRGNFPPRFSGRQFPNYSSELNVNALELEDSALYLCASSL.

An N-terminal signal peptide occupies residues 1 to 21; it reads MGPRLLFWALLCLLGTGPVEA. In terms of domain architecture, Ig-like spans 22-114; that stretch reads GVTQSPTHLI…SALYLCASSL (93 aa). Cys42 and Cys110 form a disulfide bridge. Asn90 carries an N-linked (GlcNAc...) asparagine glycan.

As to quaternary structure, alpha-beta TR is a heterodimer composed of an alpha and beta chain; disulfide-linked. The alpha-beta TR is associated with the transmembrane signaling CD3 coreceptor proteins to form the TR-CD3 (TcR or TCR). The assembly of alpha-beta TR heterodimers with CD3 occurs in the endoplasmic reticulum where a single alpha-beta TR heterodimer associates with one CD3D-CD3E heterodimer, one CD3G-CD3E heterodimer and one CD247 homodimer forming a stable octameric structure. CD3D-CD3E and CD3G-CD3E heterodimers preferentially associate with TR alpha and TR beta chains, respectively. The association of the CD247 homodimer is the last step of TcR assembly in the endoplasmic reticulum and is required for transport to the cell surface.

The protein resides in the cell membrane. Functionally, v region of the variable domain of T cell receptor (TR) beta chain that participates in the antigen recognition. Alpha-beta T cell receptors are antigen specific receptors which are essential to the immune response and are present on the cell surface of T lymphocytes. Recognize peptide-major histocompatibility (MH) (pMH) complexes that are displayed by antigen presenting cells (APC), a prerequisite for efficient T cell adaptive immunity against pathogens. Binding of alpha-beta TR to pMH complex initiates TR-CD3 clustering on the cell surface and intracellular activation of LCK that phosphorylates the ITAM motifs of CD3G, CD3D, CD3E and CD247 enabling the recruitment of ZAP70. In turn ZAP70 phosphorylates LAT, which recruits numerous signaling molecules to form the LAT signalosome. The LAT signalosome propagates signal branching to three major signaling pathways, the calcium, the mitogen-activated protein kinase (MAPK) kinase and the nuclear factor NF-kappa-B (NF-kB) pathways, leading to the mobilization of transcription factors that are critical for gene expression and essential for T cell growth and differentiation. The T cell repertoire is generated in the thymus, by V-(D)-J rearrangement. This repertoire is then shaped by intrathymic selection events to generate a peripheral T cell pool of self-MH restricted, non-autoaggressive T cells. Post-thymic interaction of alpha-beta TR with the pMH complexes shapes TR structural and functional avidity. This Homo sapiens (Human) protein is T cell receptor beta variable 5-8.